Here is a 593-residue protein sequence, read N- to C-terminus: UvrABC system protein C (593 aa).

The region spanning 17-94 (MEPGCYLMKD…IKQYQPRYNI (78 aa)) is the GIY-YIG domain. Residues 199–234 (KTILKSLEERMLTASESLDFERAKEYRDLIQHIQNL) form the UVR domain.

Belongs to the UvrC family. Interacts with UvrB in an incision complex.

The protein resides in the cytoplasm. In terms of biological role, the UvrABC repair system catalyzes the recognition and processing of DNA lesions. UvrC both incises the 5' and 3' sides of the lesion. The N-terminal half is responsible for the 3' incision and the C-terminal half is responsible for the 5' incision. In Staphylococcus aureus (strain Mu3 / ATCC 700698), this protein is UvrABC system protein C.